The primary structure comprises 406 residues: Enoyl-[acyl-carrier-protein] reductase [NADH] (406 aa).

NAD(+) is bound by residues 48-53 (GASTGF), 74-75 (FE), 111-112 (DA), and 140-141 (IA). Tyr226 contributes to the substrate binding site. Tyr236 (proton donor) is an active-site residue. NAD(+) contacts are provided by residues Lys245 and 275 to 277 (LVT).

This sequence belongs to the TER reductase family. As to quaternary structure, monomer.

It catalyses the reaction a 2,3-saturated acyl-[ACP] + NAD(+) = a (2E)-enoyl-[ACP] + NADH + H(+). It functions in the pathway lipid metabolism; fatty acid biosynthesis. Involved in the final reduction of the elongation cycle of fatty acid synthesis (FAS II). Catalyzes the reduction of a carbon-carbon double bond in an enoyl moiety that is covalently linked to an acyl carrier protein (ACP). This chain is Enoyl-[acyl-carrier-protein] reductase [NADH], found in Coxiella burnetii (strain Dugway 5J108-111).